The sequence spans 262 residues: Phosphatidylglycerol--prolipoprotein diacylglyceryl transferase (262 aa).

3 helical membrane-spanning segments follow: residues 17 to 37 (LKVHWYGLMYVIGIAATWILA), 57 to 77 (LVFYAAIGVVVGGRLGYALFY), and 92 to 112 (IWEGGMAFHGGLIGVLIAMYA). Position 140 (Arg140) interacts with a 1,2-diacyl-sn-glycero-3-phospho-(1'-sn-glycerol). 2 consecutive transmembrane segments (helical) span residues 200 to 220 (MAVSGLFLLGYGVFRFAVEFV) and 234 to 254 (WLTMGQILCLPMILFGIVLLA).

The protein belongs to the Lgt family.

The protein resides in the cell inner membrane. The enzyme catalyses L-cysteinyl-[prolipoprotein] + a 1,2-diacyl-sn-glycero-3-phospho-(1'-sn-glycerol) = an S-1,2-diacyl-sn-glyceryl-L-cysteinyl-[prolipoprotein] + sn-glycerol 1-phosphate + H(+). The protein operates within protein modification; lipoprotein biosynthesis (diacylglyceryl transfer). Its function is as follows. Catalyzes the transfer of the diacylglyceryl group from phosphatidylglycerol to the sulfhydryl group of the N-terminal cysteine of a prolipoprotein, the first step in the formation of mature lipoproteins. This chain is Phosphatidylglycerol--prolipoprotein diacylglyceryl transferase, found in Methylococcus capsulatus (strain ATCC 33009 / NCIMB 11132 / Bath).